Reading from the N-terminus, the 241-residue chain is MLKIQKLSIAALMVSAVISGQVFAEDNTFDEKAASYAVGTLMGSQMKDLVDSHKEVIKYDNARILDGLKDALEGKVDVRKDEKIQKTLESIEAKLVAASKAKAESIAKQAKEEGDKFRAEFAKGKDVKTTQSGLMYKIESAGKGDTIKSTDTVKVHYTGKLPNGKVFDSSVERGQPVEFQLDQVIKGWTEGLQLVKKGGKIQFVIAPELGYGEQGAGASIPPNSTLIFDVEVLDVNPKSEK.

In terms of domain architecture, PPIase FKBP-type spans 150–241; it reads TDTVKVHYTG…VLDVNPKSEK (92 aa).

Belongs to the FKBP-type PPIase family.

The catalysed reaction is [protein]-peptidylproline (omega=180) = [protein]-peptidylproline (omega=0). In terms of biological role, PPIases accelerate the folding of proteins. It catalyzes the cis-trans isomerization of proline imidic peptide bonds in oligopeptides. The polypeptide is Probable FKBP-type peptidyl-prolyl cis-trans isomerase (Haemophilus influenzae (strain ATCC 51907 / DSM 11121 / KW20 / Rd)).